We begin with the raw amino-acid sequence, 234 residues long: Glucosamine-6-phosphate deaminase (234 aa).

The active-site Proton acceptor; for enolization step is D62. N128 acts as the For ring-opening step in catalysis. The Proton acceptor; for ring-opening step role is filled by H130. The For ring-opening step role is filled by E135.

The protein belongs to the glucosamine/galactosamine-6-phosphate isomerase family. NagB subfamily.

The catalysed reaction is alpha-D-glucosamine 6-phosphate + H2O = beta-D-fructose 6-phosphate + NH4(+). It functions in the pathway amino-sugar metabolism; N-acetylneuraminate degradation; D-fructose 6-phosphate from N-acetylneuraminate: step 5/5. In terms of biological role, catalyzes the reversible isomerization-deamination of glucosamine 6-phosphate (GlcN6P) to form fructose 6-phosphate (Fru6P) and ammonium ion. This is Glucosamine-6-phosphate deaminase from Streptococcus pyogenes serotype M49 (strain NZ131).